The sequence spans 56 residues: MIYYSNYYGGYGYGGLGCGYGCGYRGYGCGYGGYGGYGNGYYCPSCYGRYWSYGFY.

Belongs to the KRTAP type 20 family. Interacts with hair keratins.

In the hair cortex, hair keratin intermediate filaments are embedded in an interfilamentous matrix, consisting of hair keratin-associated proteins (KRTAP), which are essential for the formation of a rigid and resistant hair shaft through their extensive disulfide bond cross-linking with abundant cysteine residues of hair keratins. The matrix proteins include the high-sulfur and high-glycine-tyrosine keratins. This Homo sapiens (Human) protein is Keratin-associated protein 20-1 (KRTAP20-1).